The chain runs to 364 residues: Transcription factor TGA4 (364 aa).

The interval 39-79 (PGSIIIPTNEKPDSLSEDTSHGTEGTPHKFDQEASTSRHPD) is disordered. Basic and acidic residues predominate over residues 48–79 (EKPDSLSEDTSHGTEGTPHKFDQEASTSRHPD). In terms of domain architecture, bZIP spans 78-141 (PDKIQRRLAQ…NGVDTNALSF (64 aa)). Coiled coils occupy residues 79–127 (DKIQ…RQQG) and 257–277 (NLRQ…EKLQ). The interval 80–100 (KIQRRLAQNREAARKSRLRKK) is basic motif. The leucine-zipper stretch occupies residues 106 to 120 (LETSRLKLIHLEQEL). A DOG1 domain is found at 149–359 (IVAFEMEYGH…RALSSSWAAR (211 aa)). Cys-256 and Cys-262 are disulfide-bonded.

Belongs to the bZIP family. Binds DNA as a dimer. Interaction with the Dof domain proteins OBP1, OBP2 or OBP3 enhances the binding to the ocs element. Interacts with RAP2-3/EPB, an ethylene-responsive element binding protein. The reduced form interacts with NPR1. As to expression, predominantly expressed in roots.

It is found in the nucleus. In terms of biological role, transcriptional activator that binds specifically to the DNA sequence 5'-TGACG-3'. Recognizes ocs elements like the as-1 motif of the cauliflower mosaic virus 35S promoter. Binding to the as-1-like cis elements mediate auxin- and salicylic acid-inducible transcription. May be involved in the induction of the systemic acquired resistance (SAR) via its interaction with NPR1. Could also bind to the Hex-motif (5'-TGACGTGG-3') another cis-acting element found in plant histone promoters. The polypeptide is Transcription factor TGA4 (TGA4) (Arabidopsis thaliana (Mouse-ear cress)).